Consider the following 168-residue polypeptide: Protein B-Myc (168 aa).

2 disordered regions span residues 26–94 (DDEE…DLPE) and 146–168 (EGAS…TCNT). Serine 59 and serine 67 each carry phosphoserine.

The protein localises to the nucleus. Seems to act as an inhibitor of cellular proliferation. In Rattus norvegicus (Rat), this protein is Protein B-Myc (Mycb).